We begin with the raw amino-acid sequence, 248 residues long: Adenylate kinase (248 aa).

37–42 (GAGKGT) serves as a coordination point for ATP. Positions 57–86 (SPGNLLREEMNRNSPITAQIKDYVSKGQLV) are NMP. AMP-binding positions include R63, 84–86 (QLV), 111–114 (GFPR), and Q118. Residues 149–181 (GRRFDPITGNTYHIIYDPPPPDIADRVVVRTDD) form an LID region. Position 150 (R150) interacts with ATP. 2 residues coordinate AMP: R178 and R189.

Belongs to the adenylate kinase family. In terms of assembly, monomer.

The protein localises to the cytoplasm. It catalyses the reaction AMP + ATP = 2 ADP. Its function is as follows. Catalyzes the reversible transfer of the terminal phosphate group between ATP and AMP. Plays an important role in cellular energy homeostasis and in adenine nucleotide metabolism. This Giardia intestinalis (Giardia lamblia) protein is Adenylate kinase.